Here is a 222-residue protein sequence, read N- to C-terminus: Glutathione S-transferase alpha-2 (222 aa).

Positions 3 to 83 (GKPVLHYFNA…YIATKYDLYG (81 aa)) constitute a GST N-terminal domain. Lys-4 is modified (N6-succinyllysine). Residues Tyr-9, Lys-45, 54–55 (QV), and 67–68 (QT) contribute to the glutathione site. The GST C-terminal domain maps to 85–208 (DMKERALIDM…QPGSQRKPAM (124 aa)).

The protein belongs to the GST superfamily. Alpha family. In terms of assembly, homodimer or heterodimer of GSTA1 and GSTA2.

It is found in the cytoplasm. It carries out the reaction RX + glutathione = an S-substituted glutathione + a halide anion + H(+). Its function is as follows. Catalyzes the conjugation of glutathione to a large variety of electrophilic compounds. The sequence is that of Glutathione S-transferase alpha-2 (Gsta2) from Rattus norvegicus (Rat).